The following is a 418-amino-acid chain: Tyrosine--tRNA ligase (418 aa).

Residue Tyr34 participates in L-tyrosine binding. The 'HIGH' region signature appears at 39–48; sequence PTADSLHLGH. The L-tyrosine site is built by Tyr169 and Gln173. The short motif at 229 to 233 is the 'KMSKS' region element; sequence KFGKS. Lys232 contributes to the ATP binding site. The S4 RNA-binding domain maps to 352-418; the sequence is NNIVELLVSS…GKKKYFVLTY (67 aa).

Belongs to the class-I aminoacyl-tRNA synthetase family. TyrS type 1 subfamily. Homodimer.

Its subcellular location is the cytoplasm. The enzyme catalyses tRNA(Tyr) + L-tyrosine + ATP = L-tyrosyl-tRNA(Tyr) + AMP + diphosphate + H(+). Catalyzes the attachment of tyrosine to tRNA(Tyr) in a two-step reaction: tyrosine is first activated by ATP to form Tyr-AMP and then transferred to the acceptor end of tRNA(Tyr). The polypeptide is Tyrosine--tRNA ligase (Streptococcus pneumoniae (strain CGSP14)).